We begin with the raw amino-acid sequence, 659 residues long: Threonine--tRNA ligase (659 aa).

In terms of domain architecture, TGS spans 1–60 (MTVYLPDGKPLELPEGATAKDVARALGEGWERRAVGAIVDGELYDLLKPLPQGAKVRLLT). Catalytic stretches follow at residues 234–548 (TAEE…EHFA) and 252–552 (DHRR…GDFP). Zn(2+)-binding residues include cysteine 349, histidine 400, and histidine 529.

This sequence belongs to the class-II aminoacyl-tRNA synthetase family. As to quaternary structure, homodimer. Zn(2+) serves as cofactor.

The protein localises to the cytoplasm. The enzyme catalyses tRNA(Thr) + L-threonine + ATP = L-threonyl-tRNA(Thr) + AMP + diphosphate + H(+). In terms of biological role, catalyzes the attachment of threonine to tRNA(Thr) in a two-step reaction: L-threonine is first activated by ATP to form Thr-AMP and then transferred to the acceptor end of tRNA(Thr). Also edits incorrectly charged L-seryl-tRNA(Thr). The chain is Threonine--tRNA ligase from Thermus thermophilus (strain ATCC 27634 / DSM 579 / HB8).